Reading from the N-terminus, the 191-residue chain is Ribonuclease HII (191 aa).

One can recognise an RNase H type-2 domain in the interval 4–191 (YTAAGLDEVG…HRKTFLSKIQ (188 aa)). The a divalent metal cation site is built by Asp10, Glu11, and Asp106.

This sequence belongs to the RNase HII family. Mn(2+) is required as a cofactor. Mg(2+) serves as cofactor.

Its subcellular location is the cytoplasm. The catalysed reaction is Endonucleolytic cleavage to 5'-phosphomonoester.. Functionally, endonuclease that specifically degrades the RNA of RNA-DNA hybrids. This is Ribonuclease HII from Prochlorococcus marinus (strain SARG / CCMP1375 / SS120).